Reading from the N-terminus, the 74-residue chain is U-scoloptoxin(09)-Sm3a (74 aa).

The N-terminal stretch at 1–22 is a signal peptide; it reads MNANSIFLCFFIMLIGCTLTHS.

The protein belongs to the scoloptoxin-09 family. Post-translationally, contains 3 disulfide bonds. In terms of tissue distribution, expressed by the venom gland.

It is found in the secreted. This is U-scoloptoxin(09)-Sm3a from Scolopendra morsitans (Tanzanian blue ringleg centipede).